Here is a 418-residue protein sequence, read N- to C-terminus: Serine hydroxymethyltransferase (418 aa).

Residues L121 and 125-127 contribute to the (6S)-5,6,7,8-tetrahydrofolate site; that span reads GHL. K230 carries the post-translational modification N6-(pyridoxal phosphate)lysine. Residue 355-357 participates in (6S)-5,6,7,8-tetrahydrofolate binding; it reads SPF.

Belongs to the SHMT family. Homodimer. Pyridoxal 5'-phosphate is required as a cofactor.

It localises to the cytoplasm. It carries out the reaction (6R)-5,10-methylene-5,6,7,8-tetrahydrofolate + glycine + H2O = (6S)-5,6,7,8-tetrahydrofolate + L-serine. It functions in the pathway one-carbon metabolism; tetrahydrofolate interconversion. Its pathway is amino-acid biosynthesis; glycine biosynthesis; glycine from L-serine: step 1/1. Catalyzes the reversible interconversion of serine and glycine with tetrahydrofolate (THF) serving as the one-carbon carrier. This reaction serves as the major source of one-carbon groups required for the biosynthesis of purines, thymidylate, methionine, and other important biomolecules. Also exhibits THF-independent aldolase activity toward beta-hydroxyamino acids, producing glycine and aldehydes, via a retro-aldol mechanism. This chain is Serine hydroxymethyltransferase, found in Streptococcus pneumoniae (strain P1031).